The primary structure comprises 92 residues: Small ribosomal subunit protein uS19 (92 aa).

The protein belongs to the universal ribosomal protein uS19 family.

Its function is as follows. Protein S19 forms a complex with S13 that binds strongly to the 16S ribosomal RNA. The chain is Small ribosomal subunit protein uS19 from Wigglesworthia glossinidia brevipalpis.